Here is a 325-residue protein sequence, read N- to C-terminus: MSETATWQPSASIPNLLKRAAIMAEIRRFFADRGVLEVETPCMSQATVTDIHLFPFETRFVGPGHSQGINLYLMTSPEYHMKRLLAAGCGPVFQLCRSFRNEEMGRHHNPEFTMLEWYRPHYDMYRLMNEVDDLLQQVLDCQPAESLSYQQAFQRHLEIDPLSADKTQLREAAAKLDLSNIADTEEDRDTLLQLLFTMGVEPHIGKEKPTFIYHFPASQASLAQISTEDHRVAERFEVYYKGIELANGFHELTDAREQQQRFEQDNRKRAARGLPQQPIDQNLLDALAAGLPDCSGVALGVDRLVMLALGAESLADVIAFTVDRA.

Position 76 to 78 (76 to 78 (SPE)) interacts with substrate. ATP-binding positions include 100–102 (RNE) and N109. Y118 provides a ligand contact to substrate. 244-245 (EL) contributes to the ATP binding site. E251 is a substrate binding site. Residue G300 coordinates ATP.

This sequence belongs to the class-II aminoacyl-tRNA synthetase family. EpmA subfamily. As to quaternary structure, homodimer.

The enzyme catalyses D-beta-lysine + L-lysyl-[protein] + ATP = N(6)-((3R)-3,6-diaminohexanoyl)-L-lysyl-[protein] + AMP + diphosphate + H(+). In terms of biological role, with EpmB is involved in the beta-lysylation step of the post-translational modification of translation elongation factor P (EF-P) on 'Lys-34'. Catalyzes the ATP-dependent activation of (R)-beta-lysine produced by EpmB, forming a lysyl-adenylate, from which the beta-lysyl moiety is then transferred to the epsilon-amino group of EF-P 'Lys-34'. The sequence is that of Elongation factor P--(R)-beta-lysine ligase from Salmonella agona (strain SL483).